The sequence spans 426 residues: MGEKVSIILTSYNKPDYLQKAIESVIQQTHDLWELFIMDDHSNAETTAVIHKYLHDRRIQYHNSFVHPADRLKTARYATLINSALPFADGDYISYLTDDTVYHPERLSRMVQEFSHKPEAQAVYSKQKVVHVNERGEEISHFYRNANAVLDQAAFQVDHCSVMHRRSLLNLIHHKFGGYWDDDMKHWNHGDAIFWARLNNFTPFLPINEVLDTTYKTPDSFQNAYRFLPADLIDGSFVKGSDQNVYFFDQGVRHPVGEKWGFLYLNRTVAVPDPYLFQYRIGKILNIPNYILVKEADHPAIFYIEAGKKRRIVDQYAFQFYQFQRKDIVTIGKEEMETLPEGPPITWKRSELIKNPPGRRLFFIEREPFLFLNGVFHPISEQVTRKFFLHQKPISASFRNIQQFPIGKPFYPVYDEIIKKLNIATE.

This sequence to B.subtilis spore coat polysaccharide biosynthesis protein SpsA.

May be involved in maturation of the outermost layer of the spore. This is Protein CgeD (cgeD) from Bacillus subtilis (strain 168).